Reading from the N-terminus, the 43-residue chain is Protein PsbN (43 aa).

The helical transmembrane segment at 5 to 27 threads the bilayer; sequence TLIAISISGLLVSFTGYALYTAF.

It belongs to the PsbN family.

The protein resides in the plastid. It is found in the chloroplast thylakoid membrane. In terms of biological role, may play a role in photosystem I and II biogenesis. The chain is Protein PsbN from Phaseolus vulgaris (Kidney bean).